Consider the following 738-residue polypeptide: MAPTQAGHDTAYLKETVGEALARGCAAAISAQPNDPVEYLGLWLLKYVKNAEVEGNFYRERQQDLQKKKDRLVKEAQSEQAAKSVALTRKEAADALALVTAEPRELLEAAVKLVKQHTAAGAAYAAVVAEPEEPDWVAPEDDEAAAVETEDEAAGGAALAEGEEPPPEPEPEPEAAPEDGEGDAPAPKIPRPVDYSKKYFAYVAASAGQEHVLEADLYRPAPPPEDADEDFKPEPLPYSFRVLDEKLPMLYVPNVAAEERVKFFRKFPKIGSYQACGVALPASGEFKALLAADTLFPEGSGQPLSADDRDFVWEVSQSLSRALEAVQARAAEALAATSAAEAVEELKAKVAELREQAAAEAAAAAPPPPAEGEEGEGEAPPAEEEPPAEEEAEEEEEEAEEGAEEGAEEGEEGEEAPPKPKKKKKVFNPIPGLQAAIEKLTAAAEAATEADARAQAAVALEKQALDEVVALASSHSDATLSSLRNMLSVPQGTYHVVKALLHLLGRPAASFSTWKRAHSHFSPRLFEDMAAYDATAERDMAVWGRVRSCYKAAPAAKKLDAEMPNTLFGSVALMYIKQVRRVARKAVLQRELAAKLAKAQQDLADKQAALVEAERVKAEREAEEARLAAEAEAAAAAEAEAAARAAAEAEAAAAAEAAAEAAAEAAAAAAEAAAEAGEGEAVAEREAAPAEAEAAPAEGEAAPPAEGEGEAQPAQEGSNSSSSSSDSSSSEESKAAAE.

The residue at position 104 (Arg104) is an Asymmetric dimethylarginine. Composition is skewed to acidic residues over residues 134–153 (PDWV…EDEA) and 161–182 (EGEE…DGEG). The segment at 134-189 (PDWVAPEDDEAAAVETEDEAAGGAALAEGEEPPPEPEPEPEAAPEDGEGDAPAPKI) is disordered. Arg260 is subject to Asymmetric dimethylarginine. Residues 357-426 (AAAEAAAAAP…PPKPKKKKKV (70 aa)) are disordered. Positions 371–415 (EGEEGEGEAPPAEEEPPAEEEAEEEEEEAEEGAEEGAEEGEEGEE) are enriched in acidic residues. An asymmetric dimethylarginine mark is found at Arg453, Arg538, and Arg615. Residues 674 to 738 (AEAGEGEAVA…SSEESKAAAE (65 aa)) form a disordered region. Low complexity predominate over residues 689–730 (PAEAEAAPAEGEAAPPAEGEGEAQPAQEGSNSSSSSSDSSSS).

The protein belongs to the dpy-30 family. Asymmetrically dimethylated at Arg-104, Arg-260, Arg-453, Arg-538 and Arg-615 during flagellum resorption. Probably methylated by PRMT1.

The protein localises to the cytoplasm. It is found in the cytoskeleton. The protein resides in the flagellum axoneme. Functionally, flagellar radial spokes contribute to the regulation of dynein arm activity and thus the pattern of flagellar bending. They consist of a thin stalk, which is attached to the a subfiber of the outer doublet microtubule, and a bulbous head, which is attached to the stalk and appears to interact with the projections from the central pair of microtubules. Binds calmodulin in a calcium-dependent manner. The protein is Flagellar radial spoke protein 2 of Chlamydomonas reinhardtii (Chlamydomonas smithii).